Consider the following 102-residue polypeptide: Citrate lyase acyl carrier protein (102 aa).

Ser-14 bears the O-(phosphoribosyl dephospho-coenzyme A)serine mark.

It belongs to the CitD family. As to quaternary structure, oligomer with a subunit composition of (alpha,beta,gamma)6.

It is found in the cytoplasm. Functionally, covalent carrier of the coenzyme of citrate lyase. This Streptococcus equi subsp. zooepidemicus (strain MGCS10565) protein is Citrate lyase acyl carrier protein.